A 351-amino-acid polypeptide reads, in one-letter code: Protein RecA (351 aa).

Position 67-74 (67-74 (GPESSGKT)) interacts with ATP.

It belongs to the RecA family.

It localises to the cytoplasm. Its function is as follows. Can catalyze the hydrolysis of ATP in the presence of single-stranded DNA, the ATP-dependent uptake of single-stranded DNA by duplex DNA, and the ATP-dependent hybridization of homologous single-stranded DNAs. It interacts with LexA causing its activation and leading to its autocatalytic cleavage. This Arthrobacter sp. (strain FB24) protein is Protein RecA.